A 461-amino-acid chain; its full sequence is Proline--tRNA ligase (461 aa).

This sequence belongs to the class-II aminoacyl-tRNA synthetase family. ProS type 3 subfamily. As to quaternary structure, homodimer.

Its subcellular location is the cytoplasm. The enzyme catalyses tRNA(Pro) + L-proline + ATP = L-prolyl-tRNA(Pro) + AMP + diphosphate. Catalyzes the attachment of proline to tRNA(Pro) in a two-step reaction: proline is first activated by ATP to form Pro-AMP and then transferred to the acceptor end of tRNA(Pro). The sequence is that of Proline--tRNA ligase from Methanococcus vannielii (strain ATCC 35089 / DSM 1224 / JCM 13029 / OCM 148 / SB).